The chain runs to 75 residues: Conotoxin TsMEKL-011 (75 aa).

A signal peptide spans 1 to 19; the sequence is MEKLTILLLVAAVLMSTQA. The propeptide occupies 20–45; sequence LIQRGGAKRRKVNFFSIREPGAEDWR. 3 cysteine pairs are disulfide-bonded: cysteine 49–cysteine 63, cysteine 56–cysteine 67, and cysteine 62–cysteine 71.

It belongs to the conotoxin O2 superfamily. In terms of tissue distribution, expressed by the venom duct.

Its subcellular location is the secreted. This chain is Conotoxin TsMEKL-011, found in Conus tessulatus (Tessellate cone).